The following is a 208-amino-acid chain: Outer-membrane lipoprotein carrier protein (208 aa).

The signal sequence occupies residues Met-1–Ala-23.

This sequence belongs to the LolA family. Monomer.

It localises to the periplasm. Its function is as follows. Participates in the translocation of lipoproteins from the inner membrane to the outer membrane. Only forms a complex with a lipoprotein if the residue after the N-terminal Cys is not an aspartate (The Asp acts as a targeting signal to indicate that the lipoprotein should stay in the inner membrane). The protein is Outer-membrane lipoprotein carrier protein of Actinobacillus succinogenes (strain ATCC 55618 / DSM 22257 / CCUG 43843 / 130Z).